Here is a 157-residue protein sequence, read N- to C-terminus: MPRKRKSRGTRDVAEILRKWREYNEQTEADSCIDGGGSKPIRKAPPKRSRKGCMKGKGGPENGICDYTGVRQRTWGKWVAEIREPGRGAKLWLGTFSSSYEAALAYDEASKAIYGQSARLNLPLLPLCQARLLHFLMNLKFVHVRIQMQDLVLVRSD.

The Nuclear localization signal signature appears at 5 to 21 (RKSRGTRDVAEILRKWR). The disordered stretch occupies residues 29–57 (ADSCIDGGGSKPIRKAPPKRSRKGCMKGK). Over residues 40-54 (PIRKAPPKRSRKGCM) the composition is skewed to basic residues. The segment at residues 66–123 (DYTGVRQRTWGKWVAEIREPGRGAKLWLGTFSSSYEAALAYDEASKAIYGQSARLNLP) is a DNA-binding region (AP2/ERF).

Belongs to the AP2/ERF transcription factor family. ERF subfamily.

The protein resides in the nucleus. In terms of biological role, putative transcriptional activator that binds specifically to the DNA sequence 5'-[AG]CCGAC-3'. The chain is Putative dehydration-responsive element-binding protein 2H (DREB2H) from Arabidopsis thaliana (Mouse-ear cress).